A 1399-amino-acid chain; its full sequence is DNA-directed RNA polymerase subunit beta' (1399 aa).

The Zn(2+) site is built by cysteine 70, cysteine 72, cysteine 85, and cysteine 88. Mg(2+) contacts are provided by aspartate 460, aspartate 462, and aspartate 464. Cysteine 814, cysteine 888, cysteine 895, and cysteine 898 together coordinate Zn(2+). Residues 1367 to 1399 (SERKRQRDLGKPQRVSASEAEAALTEALNSSGN) are disordered. Residues 1382 to 1399 (SASEAEAALTEALNSSGN) show a composition bias toward low complexity.

Belongs to the RNA polymerase beta' chain family. The RNAP catalytic core consists of 2 alpha, 1 beta, 1 beta' and 1 omega subunit. When a sigma factor is associated with the core the holoenzyme is formed, which can initiate transcription. Mg(2+) serves as cofactor. It depends on Zn(2+) as a cofactor.

It catalyses the reaction RNA(n) + a ribonucleoside 5'-triphosphate = RNA(n+1) + diphosphate. DNA-dependent RNA polymerase catalyzes the transcription of DNA into RNA using the four ribonucleoside triphosphates as substrates. This is DNA-directed RNA polymerase subunit beta' from Pseudomonas paraeruginosa (strain DSM 24068 / PA7) (Pseudomonas aeruginosa (strain PA7)).